The primary structure comprises 101 residues: Glutenin, high molecular weight subunit PC256 (101 aa).

Positions 1-27 (EKLGQGQQPRQWLQPRQGQQGYYPTSP) are enriched in polar residues. Positions 1-65 (EKLGQGQQPR…QGYDSPYHVS (65 aa)) are disordered. Over residues 41 to 62 (QGYYPTSPQQSGQGQQGYDSPY) the composition is skewed to low complexity.

It belongs to the gliadin/glutenin family. Disulfide-bridge linked aggregates.

Its function is as follows. Glutenins are high-molecular weight seed storage proteins of wheat endosperm. Thought to be responsible for the visco-elastic property of wheat dough. This chain is Glutenin, high molecular weight subunit PC256, found in Triticum aestivum (Wheat).